Here is a 158-residue protein sequence, read N- to C-terminus: Vasotocin-neurophysin VT 2 (158 aa).

Residues 1–19 (MPHSTLLLCVIGLLAFSSA) form the signal peptide. A disulfide bridge links Cys20 with Cys25. Gly28 carries the glycine amide modification. Intrachain disulfides connect Cys41–Cys85, Cys44–Cys58, Cys52–Cys75, Cys59–Cys65, Cys92–Cys105, Cys99–Cys117, and Cys106–Cys111.

Belongs to the vasopressin/oxytocin family. Seven disulfide bonds are present in neurophysin.

The protein localises to the secreted. Its function is as follows. Vasotocin is an antidiuretic hormone. This chain is Vasotocin-neurophysin VT 2, found in Oncorhynchus keta (Chum salmon).